Here is a 390-residue protein sequence, read N- to C-terminus: Dihydroorotase (390 aa).

Zn(2+)-binding residues include His-54 and His-56. Residues 56 to 58 (HIR) and Asn-88 contribute to the substrate site. Lys-136, His-160, His-197, and Asp-259 together coordinate Zn(2+). Lys-136 bears the N6-carboxylysine mark. The active site involves Asp-259. Residues His-263 and 277–278 (PG) contribute to the substrate site.

This sequence belongs to the metallo-dependent hydrolases superfamily. DHOase family. Class I DHOase subfamily. It depends on Zn(2+) as a cofactor.

It carries out the reaction (S)-dihydroorotate + H2O = N-carbamoyl-L-aspartate + H(+). It functions in the pathway pyrimidine metabolism; UMP biosynthesis via de novo pathway; (S)-dihydroorotate from bicarbonate: step 3/3. Catalyzes the reversible cyclization of carbamoyl aspartate to dihydroorotate. This Saccharolobus solfataricus (strain ATCC 35092 / DSM 1617 / JCM 11322 / P2) (Sulfolobus solfataricus) protein is Dihydroorotase.